The primary structure comprises 95 residues: Large ribosomal subunit protein uL23 (95 aa).

Belongs to the universal ribosomal protein uL23 family. In terms of assembly, part of the 50S ribosomal subunit. Contacts protein L29, and trigger factor when it is bound to the ribosome.

Its function is as follows. One of the early assembly proteins it binds 23S rRNA. One of the proteins that surrounds the polypeptide exit tunnel on the outside of the ribosome. Forms the main docking site for trigger factor binding to the ribosome. This Geobacillus thermodenitrificans (strain NG80-2) protein is Large ribosomal subunit protein uL23.